An 858-amino-acid chain; its full sequence is Tetratricopeptide repeat protein 7A (858 aa).

Residue Ser51 is modified to Phosphoserine. 6 TPR repeats span residues 121 to 157 (CEAMLILGKLHYVEGSYRDAISMYARAGIDDMSMENK), 177 to 210 (ERLPNSIASRFRLTEREEEVITCFERASWIAQVF), 414 to 447 (FHLWYQVALSMVACGKSAYAVSLLRECVKLRPSD), 497 to 531 (YSLQATDATLKSKQDELHRKALQTLERAQQLAPSD), 533 to 565 (QVILYVSLQLALVRQISSAMEQLQEALKVRKDD), and 566 to 599 (AHALHLLALLFSAQKHHQHALDVVNMAITEHPEN). The residue at position 182 (Ser182) is a Phosphoserine. Phosphoserine is present on residues Ser647, Ser678, Ser679, and Ser690. At Thr693 the chain carries Phosphothreonine. TPR repeat units lie at residues 745–778 (HSVLYMRGRLAEVKGNLEEAKQLYKEALTVNPDG), 780–812 (RIMHSLGLMLSRLGHKSLAQKVLRDAVERQSTC), and 813–846 (HEAWQGLGEVLQAQGQNEAAVDCFLTALELEASS).

As to quaternary structure, component of a phosphatidylinositol 4-kinase (PI4K) complex, composed of PI4KA, EFR3 (EFR3A or EFR3B), TTC7 (TTC7A or TTC7B) and HYCC (HYCC1 or HYCC2). Interacts with PI4KA. Interaction with PI4KA is direct. Interacts with EFR3 (EFR3A or EFR3B), interaction is direct. Interacts with HYCC (HYCC1 or HYCC2), interaction is direct. Association with the PI4K complex is strongly reduced by TMEM150A. In terms of tissue distribution, expressed in epithelial cells of the intestine, thymus, and pancreas (at protein level).

The protein resides in the cytoplasm. It localises to the cell membrane. In terms of biological role, component of a complex required to localize phosphatidylinositol 4-kinase (PI4K) to the plasma membrane. The complex acts as a regulator of phosphatidylinositol 4-phosphate (PtdIns(4)P) synthesis. In the complex, plays a central role in bridging PI4KA to EFR3B and HYCC1, via direct interactions. The polypeptide is Tetratricopeptide repeat protein 7A (Homo sapiens (Human)).